A 98-amino-acid chain; its full sequence is Small ribosomal subunit protein bS6 (98 aa).

It belongs to the bacterial ribosomal protein bS6 family.

In terms of biological role, binds together with bS18 to 16S ribosomal RNA. This is Small ribosomal subunit protein bS6 from Lactobacillus helveticus (strain DPC 4571).